A 386-amino-acid polypeptide reads, in one-letter code: Protein-glutamate methylesterase/protein-glutamine glutaminase (386 aa).

In terms of domain architecture, Response regulatory spans 4 to 121 (KVLVVDDSAF…ARNRDEAVKT (118 aa)). 4-aspartylphosphate is present on aspartate 55. A disordered region spans residues 133-161 (PVSRTSARASTPPPVAKQPERSSEPTTAL). The CheB-type methylesterase domain maps to 190–384 (INRAYQLLAI…KAIMKEVGYS (195 aa)). Catalysis depends on residues serine 202, histidine 229, and aspartate 326.

It belongs to the CheB family. Phosphorylated by CheA. Phosphorylation of the N-terminal regulatory domain activates the methylesterase activity.

Its subcellular location is the cytoplasm. It catalyses the reaction [protein]-L-glutamate 5-O-methyl ester + H2O = L-glutamyl-[protein] + methanol + H(+). The enzyme catalyses L-glutaminyl-[protein] + H2O = L-glutamyl-[protein] + NH4(+). Involved in chemotaxis. Part of a chemotaxis signal transduction system that modulates chemotaxis in response to various stimuli. Catalyzes the demethylation of specific methylglutamate residues introduced into the chemoreceptors (methyl-accepting chemotaxis proteins or MCP) by CheR. Also mediates the irreversible deamidation of specific glutamine residues to glutamic acid. The polypeptide is Protein-glutamate methylesterase/protein-glutamine glutaminase (Idiomarina loihiensis (strain ATCC BAA-735 / DSM 15497 / L2-TR)).